The chain runs to 185 residues: Ion-translocating oxidoreductase complex subunit B (185 aa).

The interval 1-26 is hydrophobic; that stretch reads MNHILLIILIFAALALIFGLLLGFAA. The 59-residue stretch at 32–90 folds into the 4Fe-4S domain; it reads ESDPIVDQLDALLPQTQCGQCGYPGCRPYAEAIANGDSINKCVPGGAQTIQNIADLMGV. Residues Cys49, Cys52, Cys57, Cys73, Cys115, Cys118, Cys121, Cys125, Cys145, Cys148, Cys151, and Cys155 each coordinate [4Fe-4S] cluster. 2 consecutive 4Fe-4S ferredoxin-type domains span residues 106–135 and 136–165; these read RVAF…GAPK and LMHT…MIEL.

The protein belongs to the 4Fe4S bacterial-type ferredoxin family. RnfB subfamily. In terms of assembly, the complex is composed of six subunits: RnfA, RnfB, RnfC, RnfD, RnfE and RnfG. It depends on [4Fe-4S] cluster as a cofactor.

The protein localises to the cell inner membrane. In terms of biological role, part of a membrane-bound complex that couples electron transfer with translocation of ions across the membrane. The chain is Ion-translocating oxidoreductase complex subunit B from Tolumonas auensis (strain DSM 9187 / NBRC 110442 / TA 4).